The following is a 117-amino-acid chain: MGVIINESKSVKWEGKVEIADNFIKRAFGFMLRNPGHALIFILPFETRFNATIHGFFMLKSIDVIFLDSEKTVVDVTTLRPWRIYVPKKAAKYVIEGPVGLRKVLKVEVGDKVEWIT.

Belongs to the UPF0127 family.

This chain is UPF0127 protein PYRAB11210, found in Pyrococcus abyssi (strain GE5 / Orsay).